Consider the following 287-residue polypeptide: Fructose-1,6-bisphosphatase class 1 (287 aa).

Mg(2+) is bound by residues Glu67, Asp87, Leu89, and Asp90. Substrate contacts are provided by residues 90–93, Tyr195, and Lys225; that span reads DGSS. Mg(2+) is bound at residue Glu231.

Belongs to the FBPase class 1 family. In terms of assembly, homotetramer. Mg(2+) serves as cofactor.

The protein resides in the cytoplasm. The enzyme catalyses beta-D-fructose 1,6-bisphosphate + H2O = beta-D-fructose 6-phosphate + phosphate. The protein operates within carbohydrate biosynthesis; gluconeogenesis. This Halobacterium salinarum (strain ATCC 29341 / DSM 671 / R1) protein is Fructose-1,6-bisphosphatase class 1.